Here is a 178-residue protein sequence, read N- to C-terminus: Probable chorismate pyruvate-lyase (178 aa).

R73, L111, and E163 together coordinate substrate.

The protein belongs to the UbiC family.

Its subcellular location is the cytoplasm. It catalyses the reaction chorismate = 4-hydroxybenzoate + pyruvate. Its pathway is cofactor biosynthesis; ubiquinone biosynthesis. Removes the pyruvyl group from chorismate, with concomitant aromatization of the ring, to provide 4-hydroxybenzoate (4HB) for the ubiquinone pathway. The protein is Probable chorismate pyruvate-lyase of Pseudomonas aeruginosa (strain ATCC 15692 / DSM 22644 / CIP 104116 / JCM 14847 / LMG 12228 / 1C / PRS 101 / PAO1).